Consider the following 88-residue polypeptide: EKC/KEOPS complex subunit SPAC4H3.13 (88 aa).

Belongs to the CTAG/PCC1 family. As to quaternary structure, component of the EKC/KEOPS complex composed of at least of SPAP27G11.07c/BUD32, cgi121, gon7, pgp2 and SPAC4H3.13/PCC1; the whole complex dimerizes.

The protein resides in the cytoplasm. It localises to the nucleus. Its subcellular location is the chromosome. It is found in the telomere. Its function is as follows. Component of the EKC/KEOPS complex that is required for the formation of a threonylcarbamoyl group on adenosine at position 37 (t(6)A37) in tRNAs that read codons beginning with adenine. The complex is probably involved in the transfer of the threonylcarbamoyl moiety of threonylcarbamoyl-AMP (TC-AMP) to the N6 group of A37. SPAC4H3.13/PCC1 functions as a dimerization module for the complex. The EKC/KEOPS complex also promotes both telomere uncapping and telomere elongation. The complex is required for efficient recruitment of transcriptional coactivators. The sequence is that of EKC/KEOPS complex subunit SPAC4H3.13 from Schizosaccharomyces pombe (strain 972 / ATCC 24843) (Fission yeast).